A 296-amino-acid polypeptide reads, in one-letter code: Phosphatidylglycerol--prolipoprotein diacylglyceryl transferase (296 aa).

Helical transmembrane passes span leucine 17–glycine 37, methionine 59–tyrosine 79, and glycine 97–tryptophan 117. Residue arginine 142 participates in a 1,2-diacyl-sn-glycero-3-phospho-(1'-sn-glycerol) binding. The next 2 membrane-spanning stretches (helical) occupy residues methionine 230–phenylalanine 250 and leucine 265–tryptophan 285.

It belongs to the Lgt family.

The protein resides in the cell inner membrane. The catalysed reaction is L-cysteinyl-[prolipoprotein] + a 1,2-diacyl-sn-glycero-3-phospho-(1'-sn-glycerol) = an S-1,2-diacyl-sn-glyceryl-L-cysteinyl-[prolipoprotein] + sn-glycerol 1-phosphate + H(+). Its pathway is protein modification; lipoprotein biosynthesis (diacylglyceryl transfer). In terms of biological role, catalyzes the transfer of the diacylglyceryl group from phosphatidylglycerol to the sulfhydryl group of the N-terminal cysteine of a prolipoprotein, the first step in the formation of mature lipoproteins. The chain is Phosphatidylglycerol--prolipoprotein diacylglyceryl transferase from Burkholderia mallei (strain NCTC 10247).